Here is a 125-residue protein sequence, read N- to C-terminus: Large ribosomal subunit protein bL12 (125 aa).

This sequence belongs to the bacterial ribosomal protein bL12 family. In terms of assembly, homodimer. Part of the ribosomal stalk of the 50S ribosomal subunit. Forms a multimeric L10(L12)X complex, where L10 forms an elongated spine to which 2 to 4 L12 dimers bind in a sequential fashion. Binds GTP-bound translation factors.

Forms part of the ribosomal stalk which helps the ribosome interact with GTP-bound translation factors. Is thus essential for accurate translation. In Francisella tularensis subsp. tularensis (strain SCHU S4 / Schu 4), this protein is Large ribosomal subunit protein bL12.